A 388-amino-acid chain; its full sequence is Transcription factor TB1 (388 aa).

Positions 115 to 173 (RKDRHSKISTAGGMRDRRMRLSLDVARKFFALQDMLGFDKASKTVQWLLNMSKAAIREI) constitute a TCP domain. 2 disordered regions span residues 180–269 (SVCE…EKNR) and 289–331 (AAGE…VGVS). A compositionally biased stretch (polar residues) spans 187-201 (SSSLSVDGKQQQHSN). Basic and acidic residues-rich tracts occupy residues 210–224 (GDHKGAAHGHSDGKK) and 247–269 (VPDKESRAKARERARERTKEKNR). The R domain maps to 250–267 (KESRAKARERARERTKEK). A compositionally biased stretch (low complexity) spans 289–314 (AAGEDKSPTSPSNNLNHSSSTNLVST).

In terms of assembly, interacts with MADS57. Expressed in the axillary bud of the first formed leaf node. Expressed in axillary buds, shoot apical meristem, young leaves, vascular tissues and the tips of crown roots.

Its subcellular location is the nucleus. Functionally, probable transcription factor that functions as a negative regulator of lateral branching, presumably through its expression in axillary buds. Involved in the fine tuning of shoot branching. May function as an integrator of multiple signaling pathways to regulate the development of axillary buds. Works partially downstream of strigolactones to inhibit bud outgrowth. Binds to MADS57 to suppress the negative regulation of D14 by MADS57 and balance the expression of D14 for tillering. This chain is Transcription factor TB1, found in Oryza sativa subsp. japonica (Rice).